Consider the following 312-residue polypeptide: Isochorismatase (312 aa).

In terms of domain architecture, Carrier spans 229 to 302 (VFTCENIRKQ…EWQKLLTTRS (74 aa)). Residue Ser-263 is modified to O-(pantetheine 4'-phosphoryl)serine.

It belongs to the isochorismatase family.

It carries out the reaction isochorismate + H2O = (2S,3S)-2,3-dihydroxy-2,3-dihydrobenzoate + pyruvate. Its pathway is siderophore biosynthesis; bacillibactin biosynthesis. The polypeptide is Isochorismatase (dhbB) (Bacillus subtilis (strain 168)).